A 328-amino-acid polypeptide reads, in one-letter code: Gonadotropin-releasing hormone receptor (328 aa).

Over 1-38 (MANGDSPDQNENHCSAINSSILLTPGSLPTLTLSGKIR) the chain is Extracellular. Residue asparagine 18 is glycosylated (N-linked (GlcNAc...) asparagine). Residues 39–58 (VTVTFFLFLLSTIFNTSFLL) form a helical membrane-spanning segment. Residues 59–77 (KLQNWTQRKEKRKKLSKMK) lie on the Cytoplasmic side of the membrane. The helical transmembrane segment at 78 to 97 (VLLKHLTLANLLETLIVMPL) threads the bilayer. Topologically, residues 98 to 115 (DGMWNITVQWYAGELLCK) are extracellular. The N-linked (GlcNAc...) asparagine glycan is linked to asparagine 102. Cysteine 114 and cysteine 196 form a disulfide bridge. The helical transmembrane segment at 116 to 137 (VLSYLKLFSMYAPAFMMVVISL) threads the bilayer. Over 138–164 (DRSLAITRPLAVKSNSKLGQFMIGLAW) the chain is Cytoplasmic. The chain crosses the membrane as a helical span at residues 165–184 (LLSSIFAGPQLYIFGMIHLA). Topologically, residues 185-212 (DDSGQTEGFSQCVTHCSFPQWWHQAFYN) are extracellular. Residues 213–232 (FFTFSCLFIIPLLIMLICNA) traverse the membrane as a helical segment. Residues 233-281 (KIIFTLTRVLHQDPHKLQLNQSKNNIPQARLRTLKMTVAFATSFTVCWT) lie on the Cytoplasmic side of the membrane. A helical membrane pass occupies residues 282–300 (PYYVLGIWYWFDPDMVNRV). The Extracellular portion of the chain corresponds to 301–306 (SDPVNH). The helical transmembrane segment at 307 to 326 (FFFLFAFLNPCFDPLIYGYF) threads the bilayer. The Cytoplasmic segment spans residues 327–328 (SL).

This sequence belongs to the G-protein coupled receptor 1 family.

The protein resides in the cell membrane. Functionally, receptor for gonadotropin releasing hormone (GnRH) that mediates the action of GnRH to stimulate the secretion of the gonadotropic hormones luteinizing hormone (LH) and follicle-stimulating hormone (FSH). This receptor mediates its action by association with G-proteins that activate a phosphatidylinositol-calcium second messenger system. The protein is Gonadotropin-releasing hormone receptor (GNRHR) of Ovis aries (Sheep).